A 99-amino-acid chain; its full sequence is Putative protein tag-209 (99 aa).

Positions 1–16 (MLKLLAFVALLSVSVS) are cleaved as a signal peptide.

The polypeptide is Putative protein tag-209 (tag-209) (Caenorhabditis elegans).